We begin with the raw amino-acid sequence, 355 residues long: Cyclic nucleotide-gated potassium channel RHE_CH03180 (355 aa).

The Cytoplasmic segment spans residues 1-12 (MSAVPFSKISTP). Residues 13–30 (LNALFATIGLLVVAALTT) traverse the membrane as a helical segment. Residues 31 to 38 (QGLTGQER) lie on the Periplasmic side of the membrane. The chain crosses the membrane as a helical span at residues 39-61 (LVFELLLAAIWLAYVLQLSGTLL). The Cytoplasmic segment spans residues 62–73 (SRRRRLSGEMTA). A helical membrane pass occupies residues 74 to 93 (LVIDLLAVLVPAAAFLFVGS). A helical transmembrane segment spans residues 94-111 (RDRDLYCAIWLLKPLRDS). The Cytoplasmic portion of the chain corresponds to 112 to 128 (TFFRLLAKVVANESRNL). Residues 129–149 (LGVTSVFGIVLFGAALAGYII) traverse the membrane as a helical segment. Topologically, residues 150–160 (ERDVQPDKFGS) are periplasmic. Residues 161 to 179 (IPQAMWWAVVTLSTTGYGD) constitute an intramembrane region (pore-forming). A Selectivity filter motif is present at residues 174 to 179 (TTGYGD). At 180–184 (EIPQS) the chain is on the periplasmic side. The chain crosses the membrane as a helical span at residues 185-209 (LAGRVLAGLVMMSGIGIFALWAGIL). Topologically, residues 210-355 (ATGFYEEVRR…LERRGGPPKE (146 aa)) are cytoplasmic. Residues 297–298 (GE), 307–308 (RS), and Arg-348 each bind 3',5'-cyclic AMP.

Belongs to the potassium channel family. As to quaternary structure, homotetramer.

The protein localises to the cell membrane. Its function is as follows. Cyclic nucleotide-regulated potassium channel activated by cAMP. This is Cyclic nucleotide-gated potassium channel RHE_CH03180 from Rhizobium etli (strain ATCC 51251 / DSM 11541 / JCM 21823 / NBRC 15573 / CFN 42).